The chain runs to 162 residues: Lipoprotein signal peptidase (162 aa).

The next 4 membrane-spanning stretches (helical) occupy residues 9 to 29 (LCLV…LVAT), 39 to 59 (VIHG…FGLF), 66 to 86 (VRKF…LWLY), and 95 to 115 (VLSF…IDRF). Residues Asp-122 and Asp-140 contribute to the active site. Residues 136 to 156 (FNVADSAITIGMVVFVYHVIF) form a helical membrane-spanning segment.

Belongs to the peptidase A8 family.

The protein resides in the cell inner membrane. The catalysed reaction is Release of signal peptides from bacterial membrane prolipoproteins. Hydrolyzes -Xaa-Yaa-Zaa-|-(S,diacylglyceryl)Cys-, in which Xaa is hydrophobic (preferably Leu), and Yaa (Ala or Ser) and Zaa (Gly or Ala) have small, neutral side chains.. It functions in the pathway protein modification; lipoprotein biosynthesis (signal peptide cleavage). This protein specifically catalyzes the removal of signal peptides from prolipoproteins. The polypeptide is Lipoprotein signal peptidase (Desulforapulum autotrophicum (strain ATCC 43914 / DSM 3382 / VKM B-1955 / HRM2) (Desulfobacterium autotrophicum)).